The sequence spans 260 residues: MPSNCRRFEGKVAIVTAATKGIGLAIAERLLDEGASVVIGSRNQKNVDEAIEYLKNKGLTKVAGIAGHIASTDDQKKLVDFTLQKFGKINILVNNHGINPAFGHILEVSDQVWDKLFEVNVKAGFQMTKLVHPHIAKEGGGAIIFNASYSAYKSPPGIAAYGVTKTTLVGLTRALAMGLAKDNIRVNGIAPGVIKTKMSQVLWDGGEDAEKELTDIQEIALGRLGVPDDCAGTVAYLASDDSSYITGEMIIIAGGVQARL.

14–38 lines the NADP(+) pocket; that stretch reads IVTAATKGIGLAIAERLLDEGASVV. Serine 148 is a binding site for substrate. Tyrosine 161 functions as the Proton acceptor in the catalytic mechanism. Lysine 165 contributes to the NADP(+) binding site.

It belongs to the short-chain dehydrogenases/reductases (SDR) family.

The enzyme catalyses a secondary alcohol + NADP(+) = a ketone + NADPH + H(+). Its function is as follows. Catalyzes the reduction of isatin, 4-oxonon-2-enal, 9,10-phenanthrenequinone, menadione, 2,3-hexaenadione, 3,4-hexanedione and 2,3-heptanedione. The protein is Dehydrogenase/reductase SDR family member 4 of Caenorhabditis elegans.